Consider the following 267-residue polypeptide: Phosphatidylserine decarboxylase proenzyme (267 aa).

Active-site charge relay system; for autoendoproteolytic cleavage activity residues include Asp-78, His-132, and Ser-236. The active-site Schiff-base intermediate with substrate; via pyruvic acid; for decarboxylase activity is the Ser-236. Ser-236 carries the pyruvic acid (Ser); by autocatalysis modification.

Belongs to the phosphatidylserine decarboxylase family. PSD-B subfamily. Prokaryotic type I sub-subfamily. Heterodimer of a large membrane-associated beta subunit and a small pyruvoyl-containing alpha subunit. Requires pyruvate as cofactor. In terms of processing, is synthesized initially as an inactive proenzyme. Formation of the active enzyme involves a self-maturation process in which the active site pyruvoyl group is generated from an internal serine residue via an autocatalytic post-translational modification. Two non-identical subunits are generated from the proenzyme in this reaction, and the pyruvate is formed at the N-terminus of the alpha chain, which is derived from the carboxyl end of the proenzyme. The autoendoproteolytic cleavage occurs by a canonical serine protease mechanism, in which the side chain hydroxyl group of the serine supplies its oxygen atom to form the C-terminus of the beta chain, while the remainder of the serine residue undergoes an oxidative deamination to produce ammonia and the pyruvoyl prosthetic group on the alpha chain. During this reaction, the Ser that is part of the protease active site of the proenzyme becomes the pyruvoyl prosthetic group, which constitutes an essential element of the active site of the mature decarboxylase.

It localises to the cell membrane. It catalyses the reaction a 1,2-diacyl-sn-glycero-3-phospho-L-serine + H(+) = a 1,2-diacyl-sn-glycero-3-phosphoethanolamine + CO2. It participates in phospholipid metabolism; phosphatidylethanolamine biosynthesis; phosphatidylethanolamine from CDP-diacylglycerol: step 2/2. Its function is as follows. Catalyzes the formation of phosphatidylethanolamine (PtdEtn) from phosphatidylserine (PtdSer). This Helicobacter pylori (strain Shi470) protein is Phosphatidylserine decarboxylase proenzyme.